Here is a 339-residue protein sequence, read N- to C-terminus: MCNLLNIEKDPIRVLITGAAGNIGYAIAPMIARGIMLGPDQPMILHLLDIEPASSSLEAVKMELQDSAFPLLKGVIATTNVVEACKDVNIVIMIGGFPRIAGMERKDVMSKNVVIYKAQASALERYASDDCKVLVVANPANTNALILKEFAPSIPEENITCLTRLDHNRALAQLADKLSVPVSSVKNVIVWGNHSSTQYPDTNHATVSTKTGDRPLKELVTDHNWLKNEFIVEVQQRGAAVLRARKQSSAFSAAGAACDHIRDWFLGTPKGTWVSMGVCSDGSYGIPPGLVYSFPVICEKGSWKIVQGLSIDEFSREKMDDSARELAEEKDLAYSCLNV.

NAD(+) is bound by residues 22–23 (NI), Asp-49, and Gly-96. Oxaloacetate is bound at residue Arg-105. NAD(+) is bound by residues Gln-119 and Asn-138. The oxaloacetate site is built by Asn-138, Arg-169, His-194, and Ser-249. His-194 (proton acceptor) is an active-site residue.

This sequence belongs to the LDH/MDH superfamily. MDH type 2 family. Expressed in rosette leaves at low levels.

Its subcellular location is the cytoplasm. The enzyme catalyses (S)-malate + NAD(+) = oxaloacetate + NADH + H(+). Its function is as follows. Catalyzes a reversible NAD-dependent dehydrogenase reaction involved in central metabolism and redox homeostasis between organelle compartments. In Arabidopsis thaliana (Mouse-ear cress), this protein is Malate dehydrogenase 3, cytoplasmic.